The chain runs to 327 residues: GTPase Obg (327 aa).

Residues 2–160 (HILKDSLSIT…LNLRLELSLI (159 aa)) enclose the Obg domain. Residues 161–326 (ADIGLVGFPN…LVSELFALSR (166 aa)) form the OBG-type G domain. Residues 167-174 (GFPNAGKS), 192-196 (FTTRF), 213-216 (DVPG), 280-283 (NKLD), and 307-309 (SIY) each bind GTP. Mg(2+)-binding residues include S174 and T194.

This sequence belongs to the TRAFAC class OBG-HflX-like GTPase superfamily. OBG GTPase family. In terms of assembly, monomer. Mg(2+) serves as cofactor.

The protein resides in the cytoplasm. In terms of biological role, an essential GTPase which binds GTP, GDP and possibly (p)ppGpp with moderate affinity, with high nucleotide exchange rates and a fairly low GTP hydrolysis rate. Plays a role in control of the cell cycle, stress response, ribosome biogenesis and in those bacteria that undergo differentiation, in morphogenesis control. The sequence is that of GTPase Obg from Borrelia hermsii (strain HS1 / DAH).